The sequence spans 853 residues: MRVKEIRKNWQHLRGGILLLGMLMICSAAKEKTWVTIYYGVPVWREATTTLFCASDAKAYDTEVHNVWATHACVPTDPNPQEVVLGNVTENFNMWKNNMVDQMHEDIISLWDESLKPCVKLTPLCVTLNCTNLNITKNTTNPTSSSWGMMEKGEIKNCSFYITTSIRNKVKKEYALFNRLDVVPIENTNNTKYRLISCNTSVITQACPKVSFQPIPIHYCVPAGFAMLKCNNKTFNGSGPCTNVSTVQCTHGIRPVVSTQLLLNGSLAEEDIVIRSENFTDNAKTIIVQLNESVVINCTRPNNNTRRRLSIGPGRAFYARRNIIGDIRQAHCNISRAKWNNTLQQIVIKLREKFRNKTIAFNQSSGGDPEIVMHSFNCGGEFFYCNTAQLFNSTWNVTGGTNGTEGNDIITLQCRIKQIINMWQKVGKAMYAPPITGQIRCSSNITGLLLTRDGGNSTETETEIFRPGGGDMRDNWRSELYKYKVVRIEPIGVAPTRAKRRTVQREKRAVGIGAVFLGFLGAAGSTMGAASVTLTVQARLLLSGIVQQQNNLLRAIEAQQHMLQLTVWGIKQLQARVLALERYLRDQQLMGIWGCSGKLICTTSVPWNVSWSNKSVDDIWNNMTWMEWEREIDNYTDYIYDLLEKSQTQQEKNEKELLELDKWASLWNWFDITNWLWYIRLFIMIVGGLIGLRIVFAVLSIVNRVRQGYSPLSFQTLLPASRGPDRPEGTEEEGGERDRDRSGPLVNGFLALFWVDLRNLCLFLYHLLRNLLLIVTRIVELLGRRGWEALKYWWNLLQYWSQELKNSAVSLLNATAIAVAEGTDRVIKIVQRACRAIRNIPTRIRQGLERALL.

An N-terminal signal peptide occupies residues 1-31; it reads MRVKEIRKNWQHLRGGILLLGMLMICSAAKE. At 32-681 the chain is on the extracellular side; sequence KTWVTIYYGV…ITNWLWYIRL (650 aa). A disulfide bond links Cys-53 and Cys-73. N-linked (GlcNAc...) asparagine; by host glycans are attached at residues Asn-87, Asn-129, Asn-134, Asn-138, Asn-157, Asn-189, Asn-199, Asn-232, Asn-236, Asn-243, Asn-264, Asn-278, Asn-291, Asn-297, Asn-303, Asn-333, Asn-340, Asn-356, and Asn-362. Disulfide bonds link Cys-118/Cys-207, Cys-125/Cys-198, Cys-130/Cys-158, Cys-220/Cys-249, and Cys-230/Cys-241. Residues 130–157 are V1; it reads CTNLNITKNTTNPTSSSWGMMEKGEIKN. Residues 158 to 198 form a V2 region; the sequence is CSFYITTSIRNKVKKEYALFNRLDVVPIENTNNTKYRLISC. The tract at residues 298-331 is V3; it reads CTRPNNNTRRRLSIGPGRAFYARRNIIGDIRQAH. An intrachain disulfide couples Cys-298 to Cys-332. The CD4-binding loop stretch occupies residues 364 to 374; the sequence is SSGGDPEIVMH. 2 disulfide bridges follow: Cys-378–Cys-441 and Cys-385–Cys-414. Residues 385-414 are V4; the sequence is CNTAQLFNSTWNVTGGTNGTEGNDIITLQC. Residues Asn-392, Asn-396, Asn-402, Asn-444, and Asn-456 are each glycosylated (N-linked (GlcNAc...) asparagine; by host). Positions 459-468 are V5; it reads ETETEIFRPG. The interval 509–529 is fusion peptide; the sequence is AVGIGAVFLGFLGAAGSTMGA. Positions 571 to 589 are immunosuppression; that stretch reads KQLQARVLALERYLRDQQL. Cys-595 and Cys-601 form a disulfide bridge. 4 N-linked (GlcNAc...) asparagine; by host glycosylation sites follow: Asn-608, Asn-613, Asn-622, and Asn-634. The stretch at 630–664 forms a coiled coil; it reads REIDNYTDYIYDLLEKSQTQQEKNEKELLELDKWA. Positions 659 to 680 are MPER; binding to GalCer; sequence ELDKWASLWNWFDITNWLWYIR. Residues 682-702 form a helical membrane-spanning segment; it reads FIMIVGGLIGLRIVFAVLSIV. Over 703-853 the chain is Cytoplasmic; sequence NRVRQGYSPL…IRQGLERALL (151 aa). Residues 709–712 carry the YXXL motif; contains endocytosis signal motif; sequence YSPL. The tract at residues 718–740 is disordered; the sequence is LPASRGPDRPEGTEEEGGERDRD. S-palmitoyl cysteine; by host attachment occurs at residues Cys-761 and Cys-834. A Di-leucine internalization motif motif is present at residues 852–853; it reads LL.

This sequence belongs to the HIV-1 env protein family. The mature envelope protein (Env) consists of a homotrimer of non-covalently associated gp120-gp41 heterodimers. The resulting complex protrudes from the virus surface as a spike. There seems to be as few as 10 spikes on the average virion. Interacts with host CD4, CCR5 and CXCR4. Gp120 also interacts with the C-type lectins CD209/DC-SIGN and CLEC4M/DC-SIGNR (collectively referred to as DC-SIGN(R)). Gp120 and gp41 interact with GalCer. Gp120 interacts with host ITGA4/ITGB7 complex; on CD4+ T-cells, this interaction results in rapid activation of integrin ITGAL/LFA-1, which facilitates efficient cell-to-cell spreading of HIV-1. Gp120 interacts with cell-associated heparan sulfate; this interaction increases virus infectivity on permissive cells and may be involved in infection of CD4- cells. In terms of assembly, the mature envelope protein (Env) consists of a homotrimer of non-covalently associated gp120-gp41 heterodimers. The resulting complex protrudes from the virus surface as a spike. There seems to be as few as 10 spikes on the average virion. Highly glycosylated by host. The high number of glycan on the protein is reffered to as 'glycan shield' because it contributes to hide protein sequence from adaptive immune system. Post-translationally, palmitoylation of the transmembrane protein and of Env polyprotein (prior to its proteolytic cleavage) is essential for their association with host cell membrane lipid rafts. Palmitoylation is therefore required for envelope trafficking to classical lipid rafts, but not for viral replication. In terms of processing, specific enzymatic cleavages in vivo yield mature proteins. Envelope glycoproteins are synthesized as an inactive precursor that is heavily N-glycosylated and processed likely by host cell furin in the Golgi to yield the mature SU and TM proteins. The cleavage site between SU and TM requires the minimal sequence [KR]-X-[KR]-R. About 2 of the 9 disulfide bonds of gp41 are reduced by P4HB/PDI, following binding to CD4 receptor.

Its subcellular location is the virion membrane. The protein localises to the host cell membrane. It localises to the host endosome membrane. Oligomerizes in the host endoplasmic reticulum into predominantly trimers. In a second time, gp160 transits in the host Golgi, where glycosylation is completed. The precursor is then proteolytically cleaved in the trans-Golgi and thereby activated by cellular furin or furin-like proteases to produce gp120 and gp41. Functionally, attaches the virus to the host lymphoid cell by binding to the primary receptor CD4. This interaction induces a structural rearrangement creating a high affinity binding site for a chemokine coreceptor like CXCR4 and/or CCR5. Acts as a ligand for CD209/DC-SIGN and CLEC4M/DC-SIGNR, which are respectively found on dendritic cells (DCs), and on endothelial cells of liver sinusoids and lymph node sinuses. These interactions allow capture of viral particles at mucosal surfaces by these cells and subsequent transmission to permissive cells. HIV subverts the migration properties of dendritic cells to gain access to CD4+ T-cells in lymph nodes. Virus transmission to permissive T-cells occurs either in trans (without DCs infection, through viral capture and transmission), or in cis (following DCs productive infection, through the usual CD4-gp120 interaction), thereby inducing a robust infection. In trans infection, bound virions remain infectious over days and it is proposed that they are not degraded, but protected in non-lysosomal acidic organelles within the DCs close to the cell membrane thus contributing to the viral infectious potential during DCs' migration from the periphery to the lymphoid tissues. On arrival at lymphoid tissues, intact virions recycle back to DCs' cell surface allowing virus transmission to CD4+ T-cells. In terms of biological role, acts as a class I viral fusion protein. Under the current model, the protein has at least 3 conformational states: pre-fusion native state, pre-hairpin intermediate state, and post-fusion hairpin state. During fusion of viral and target intracellular membranes, the coiled coil regions (heptad repeats) assume a trimer-of-hairpins structure, positioning the fusion peptide in close proximity to the C-terminal region of the ectodomain. The formation of this structure appears to drive apposition and subsequent fusion of viral and target cell membranes. Complete fusion occurs in host cell endosomes and is dynamin-dependent, however some lipid transfer might occur at the plasma membrane. The virus undergoes clathrin-dependent internalization long before endosomal fusion, thus minimizing the surface exposure of conserved viral epitopes during fusion and reducing the efficacy of inhibitors targeting these epitopes. Membranes fusion leads to delivery of the nucleocapsid into the cytoplasm. The protein is Envelope glycoprotein gp160 of Human immunodeficiency virus type 1 group M subtype B (strain 89.6) (HIV-1).